Here is a 195-residue protein sequence, read N- to C-terminus: Acireductone dioxygenase 2 (195 aa).

Positions 94, 96, 100, and 139 each coordinate Fe(2+). Ni(2+) is bound by residues histidine 94, histidine 96, glutamate 100, and histidine 139.

This sequence belongs to the acireductone dioxygenase (ARD) family. Fe(2+) serves as cofactor. Requires Ni(2+) as cofactor.

It is found in the cytoplasm. The protein localises to the nucleus. The enzyme catalyses 1,2-dihydroxy-5-(methylsulfanyl)pent-1-en-3-one + O2 = 4-methylsulfanyl-2-oxobutanoate + formate + 2 H(+). The catalysed reaction is 1,2-dihydroxy-5-(methylsulfanyl)pent-1-en-3-one + O2 = 3-(methylsulfanyl)propanoate + CO + formate + 2 H(+). Its pathway is amino-acid biosynthesis; L-methionine biosynthesis via salvage pathway; L-methionine from S-methyl-5-thio-alpha-D-ribose 1-phosphate: step 5/6. In terms of biological role, catalyzes 2 different reactions between oxygen and the acireductone 1,2-dihydroxy-3-keto-5-methylthiopentene (DHK-MTPene) depending upon the metal bound in the active site. Fe-containing acireductone dioxygenase (Fe-ARD) produces formate and 2-keto-4-methylthiobutyrate (KMTB), the alpha-ketoacid precursor of methionine in the methionine recycle pathway. Ni-containing acireductone dioxygenase (Ni-ARD) produces methylthiopropionate, carbon monoxide and formate, and does not lie on the methionine recycle pathway. This Physcomitrium patens (Spreading-leaved earth moss) protein is Acireductone dioxygenase 2.